The following is a 121-amino-acid chain: Large ribosomal subunit protein bL12 (121 aa).

The protein belongs to the bacterial ribosomal protein bL12 family. Homodimer. Part of the ribosomal stalk of the 50S ribosomal subunit. Forms a multimeric L10(L12)X complex, where L10 forms an elongated spine to which 2 to 4 L12 dimers bind in a sequential fashion. Binds GTP-bound translation factors.

Functionally, forms part of the ribosomal stalk which helps the ribosome interact with GTP-bound translation factors. Is thus essential for accurate translation. This chain is Large ribosomal subunit protein bL12, found in Serratia proteamaculans (strain 568).